The following is a 527-amino-acid chain: Peptidoglycan O-acetyltransferase (527 aa).

Transmembrane regions (helical) follow at residues 11–31, 55–75, 96–116, 131–151, 187–207, 228–248, 280–300, 352–372, 397–417, 463–483, and 505–525; these read VFVL…VGFL, LFFY…SIVF, LILG…TDFF, LHLI…AYLM, HFLD…GPIV, NIAL…VIAD, LYFD…FFNI, LILV…FIIW, MPKI…WVFF, IMYA…SFCL, and LLLS…FLYF. Residue His-363 is part of the active site.

Belongs to the membrane-bound acyltransferase family.

The protein localises to the cell membrane. Its function is as follows. Catalyzes the O-acetylation of peptidoglycan (PG), an important mechanism that appears to confer lysozyme resistance and contributes to pathogen persistence in the host. The protein is Peptidoglycan O-acetyltransferase (patA) of Helicobacter pylori (strain ATCC 700392 / 26695) (Campylobacter pylori).